A 125-amino-acid chain; its full sequence is MLYGRIFFNSGVQLLSMADKKFSLIALVSFTALAIIVLYHNISPYLTPSDLIAQGKAENVQVVGKIVSVNGNTFQLSDGKNTITAVYNGTVQRYDAEVVVVGNWDGKVLHATKVLQKCHTEYKGG.

The chain crosses the membrane as a helical span at residues 21–43 (KFSLIALVSFTALAIIVLYHNIS).

It is found in the membrane. This is an uncharacterized protein from Archaeoglobus fulgidus (strain ATCC 49558 / DSM 4304 / JCM 9628 / NBRC 100126 / VC-16).